Here is a 304-residue protein sequence, read N- to C-terminus: GTPase Era (304 aa).

An Era-type G domain is found at 7–178 (KCGVVAVLGA…KNALAALMPE (172 aa)). Positions 15–22 (GAPNAGKS) are G1. 15-22 (GAPNAGKS) contributes to the GTP binding site. The segment at 41 to 45 (QTTRA) is G2. Positions 66-69 (DTPG) are G3. GTP is bound by residues 66 to 70 (DTPGI) and 128 to 131 (NKVD). The segment at 128 to 131 (NKVD) is G4. The tract at residues 157–159 (VSA) is G5. The KH type-2 domain occupies 209 to 286 (LHEELPYDSA…HLFLHVKVDE (78 aa)).

It belongs to the TRAFAC class TrmE-Era-EngA-EngB-Septin-like GTPase superfamily. Era GTPase family. Monomer.

The protein resides in the cytoplasm. It is found in the cell inner membrane. Its function is as follows. An essential GTPase that binds both GDP and GTP, with rapid nucleotide exchange. Plays a role in 16S rRNA processing and 30S ribosomal subunit biogenesis and possibly also in cell cycle regulation and energy metabolism. The chain is GTPase Era from Erythrobacter litoralis (strain HTCC2594).